We begin with the raw amino-acid sequence, 830 residues long: MAPQPLKVGTSKLSKMVKSAPKTAGKAKKRAVEQVSEESDEEFGDQGSGIDMSDDEEEVDGDDEEDEDEAFPEFDSELEDNDQEEASDEEQDEQDTSDESEIVEEDSDSESGYNTSDIERMYASDDDLSSEENKDLPVDEKLSRLIAKNTVKPDDSIGTDDKISRAKEGVGRLVPSKHVKGSFVREYDEYEAGYGSESSTEDNPNTVGNIPMEWYDDLPHIGYDVNGRKIFRPLQGDELDKFLANVEDPSAWTSAEDKLLQQNVQLSDKELDIIRRLERAENPDADFDPYQPTIEWFTGEGKERVMPLSAAPEPKRRFVPSKWEHKKIMKIVKAIREGRIIPNKPSAEKPRFYPIWSDADQHNPHVMYMPAPQLPPPKTAESYNPPEEYLPTEEEKAEWEAMDKEDRKTDFLPEKYDALRKVPGYKNLVQEKFERCLDLYLAPRTRRVKLNIDPDSLIPKLPAPKELKPFPIASTVQYRHPGDTRVRSVSTSPDGQWIASGSEDGVVRVWDLGNGREVWRWDLHAGPIQYVEWSPSREESLLVALVAGKIAVLSPLALVAPHIAAQTLTHSNTAFATSSATTKQGAGNEVKGIESVKWTRPSERERERGVLVYVEVPGTPKQVTWHRKGDYFATVASDAANKSVLIHQLSRHGSQSPFRKTPGTIQRVAFHPSKPHFFAATQRYIRLYDLAAQKLIRTLQSGVKWISSMDVHSGGDNLIIGSYDKKLAWFDMDLSAKPYKTLRYHNRALRSVAYHPTLPLFASASDDGTVHIFHCTVYTDLMQNPLIVPLKILRGHKVIDGIGVLDLRWVPGKPWLVSSGADGEVRLWCS.

Residues 1-142 are disordered; sequence MAPQPLKVGT…NKDLPVDEKL (142 aa). Acidic residues-rich tracts occupy residues 35 to 44 and 52 to 109; these read VSEESDEEFG and MSDD…DSDS. A compositionally biased stretch (basic and acidic residues) spans 131–142; the sequence is EENKDLPVDEKL. WD repeat units lie at residues 481–520, 523–563, 660–698, 701–740, 744–783, and 799–830; these read PGDT…EVWR, LHAG…APHI, KTPG…LIRT, SGVK…KPYK, YHNR…DLMQ, and IDGI…LWCS.

The protein belongs to the WD repeat BOP1/ERB1 family. In terms of assembly, component of the NOP7 complex, composed of ERB1, NOP7 and YTM1. The complex is held together by ERB1, which interacts with NOP7 via its N-terminal domain and with YTM1 via a high-affinity interaction between the seven-bladed beta-propeller domains of the 2 proteins. The NOP7 complex associates with the 66S pre-ribosome.

It localises to the nucleus. Its subcellular location is the nucleolus. The protein localises to the nucleoplasm. Functionally, component of the NOP7 complex, which is required for maturation of the 25S and 5.8S ribosomal RNAs and formation of the 60S ribosome. The protein is Ribosome biogenesis protein ERB1 of Cryptococcus neoformans var. neoformans serotype D (strain JEC21 / ATCC MYA-565) (Filobasidiella neoformans).